The primary structure comprises 399 residues: Tryptophan synthase beta chain (399 aa).

Lys-92 bears the N6-(pyridoxal phosphate)lysine mark.

Belongs to the TrpB family. As to quaternary structure, tetramer of two alpha and two beta chains. Pyridoxal 5'-phosphate serves as cofactor.

It carries out the reaction (1S,2R)-1-C-(indol-3-yl)glycerol 3-phosphate + L-serine = D-glyceraldehyde 3-phosphate + L-tryptophan + H2O. It functions in the pathway amino-acid biosynthesis; L-tryptophan biosynthesis; L-tryptophan from chorismate: step 5/5. Its function is as follows. The beta subunit is responsible for the synthesis of L-tryptophan from indole and L-serine. In Oceanobacillus iheyensis (strain DSM 14371 / CIP 107618 / JCM 11309 / KCTC 3954 / HTE831), this protein is Tryptophan synthase beta chain.